Here is a 638-residue protein sequence, read N- to C-terminus: MSQQETHGFQTEVKQLLNLMIHSLYSNKEIFLRELVSNAADASDKLRYEALTNDALYEGDGELRVRISTNKEKGTVTIEDNGIGMTRDTVIEHLGTIAKSGTADFFKNLSGDESKDSQLIGQFGVGFYSSFIVADKVTVRTRAAGHGSDEGVQWESAGEGDFTVDTIVKETRGTEIVLHLREEEKEFADDYRLRSIITKYSDHISVPVEMWEEGTPAIEATEEQEAVAATDGQWQSMNKATALWTRNKSDVSKEEYEEFYKHISHDFTDPLLWSHNRVEGKQEYTSLLYIPSKAPWDMWNRDRKHGLKLFVQRVFVMDDAEQFMPSYLRFVQGLIDSNDLPLNVSREILQDNKVTTALRTAVTKRVLGMLEKLAKNDAEKYQTFWAEFGQVLKEGPAEDMVNKERIAGLLRFASTHTEDAAPTVSLADYVSRMQEGQSKIYYIVADSHEAAANSPHLELLRKKGIEVVLMSERIDEWLINHLTDFDGKQLHSVTRGDLELGDLEDAGEKEAQEKLETESEGLVKRIKDSLGEKVSAVKVTTRLTDTPACVVAGEGEMSTQMIKLMEAAGQAVPESKPTFEINPEHPLVARLNDEQDEALFAQWSDLLLQQAQLSEKGSLADPSAFIKLMNEMLLAKLK.

An a; substrate-binding region spans residues 1–346 (MSQQETHGFQ…SNDLPLNVSR (346 aa)). Residues 347 to 563 (EILQDNKVTT…EGEMSTQMIK (217 aa)) form a b region. A c region spans residues 564–638 (LMEAAGQAVP…MNEMLLAKLK (75 aa)).

It belongs to the heat shock protein 90 family. As to quaternary structure, homodimer.

It localises to the cytoplasm. Molecular chaperone. Has ATPase activity. In Shewanella sediminis (strain HAW-EB3), this protein is Chaperone protein HtpG.